The primary structure comprises 197 residues: uncharacterized protein (197 aa).

The next 6 membrane-spanning stretches (helical) occupy residues 11-31, 50-70, 79-99, 108-128, 136-156, and 158-178; these read AAMV…IPLI, ILAI…AYLG, AIVA…GLFA, AIVA…LGIM, ALKG…FIGL, and TLQI…AFHF.

Belongs to the chromate ion transporter (CHR) (TC 2.A.51) family.

The protein localises to the cell membrane. This is an uncharacterized protein from Bacillus subtilis (strain 168).